The following is a 263-amino-acid chain: UPF0739 protein C1orf74 homolog (263 aa).

This sequence belongs to the UPF0739 family.

This chain is UPF0739 protein C1orf74 homolog, found in Mus musculus (Mouse).